We begin with the raw amino-acid sequence, 270 residues long: Bacterial microcompartment shell protein PduB (270 aa).

BMC circularly permuted domains follow at residues 47–152 (EFVG…DRTF) and 154–262 (DVYA…GSEP).

Belongs to the EutL/PduB family. As to quaternary structure, homotrimerizes to form a pseudohexamer with a central pore. The trimers pack into an array. Both forms interact with shell protein PduA. In purified BMCs seen as a 30.0 kDa and 25.0 kDa form; the smaller form is called PduB'.

The protein resides in the bacterial microcompartment. The protein operates within polyol metabolism; 1,2-propanediol degradation. In terms of biological role, the two proteins produced are among the major shell proteins of the bacterial microcompartment (BMC) shell dedicated to 1,2-propanediol (1,2-PD) degradation. Overexpression of the gene gives large amorphous intracellular structures; when only PduB is overexpressed large circular bodies are observed which contain concentric rings, whereas with PduB' overexpression internal bodies with regular straight-lined structures were generated. The N-terminus of the long form (PduB) is required for correct formation of BMCs. May play a major role in binding the enzyme contents to the shell. Functionally, expression of a cosmid containing the full 21-gene pdu operon in E.coli allows E.coli to grow on 1,2-propanediol (1,2-PD) with the appearance of BMCs in its cytoplasm. Its function is as follows. The 1,2-PD-specific bacterial microcompartment (BMC) concentrates low levels of 1,2-PD catabolic enzymes, concentrates volatile reaction intermediates thus enhancing pathway flux and keeps the level of toxic, mutagenic propionaldehyde low. This is Bacterial microcompartment shell protein PduB from Citrobacter freundii.